The primary structure comprises 423 residues: Polyglutamylase complex subunit TTLL1 (423 aa).

The 367-residue stretch at 1 to 367 (MAGRVKWVTD…NGEIPDCKWN (367 aa)) folds into the TTL domain. Residues Lys138, 144-145 (QG), 181-184 (SVYI), and 194-196 (KFD) each bind ATP. Gln144 contributes to the a protein binding site. Residue Arg220 participates in L-glutamate binding. ATP is bound at residue 241-242 (TN). Lys259 contacts L-glutamate. Asp313, Glu326, and Asn328 together coordinate Mg(2+). Lys344 contacts L-glutamate. The tract at residues 390–423 (DGAERELRNRPGQPVGPRAGRSRDSGRSVLTTWK) is disordered.

Belongs to the tubulin polyglutamylase family. Part of the neuronal tubulin polyglutamylase complex which contains TPGS1, TPGS2, TTLL1, LRRC49 and NICN1. Interacts with PCM1, CSTPP1 and LRRC49. It depends on Mg(2+) as a cofactor. Highly expressed in brain, heart and kidney. Expressed in liver, lung, muscle, spleen, testis and trachea. In the brain, expressed in ependymal cilia, cortex, corpus callosum and striatum. Expressed in blastomere.

The protein resides in the cytoplasm. Its subcellular location is the cytoskeleton. The protein localises to the cilium basal body. It localises to the cilium axoneme. It is found in the cell projection. The protein resides in the cilium. Its subcellular location is the flagellum. It carries out the reaction (L-glutamyl)(n)-gamma-L-glutamyl-L-glutamyl-[protein] + L-glutamate + ATP = (L-glutamyl)(n+1)-gamma-L-glutamyl-L-glutamyl-[protein] + ADP + phosphate + H(+). Catalytic subunit of a polyglutamylase complex which modifies tubulin, generating side chains of glutamate on the gamma-carboxyl group of specific glutamate residues within the C-terminal tail of tubulin. Probably involved in the side-chain elongation step of the polyglutamylation reaction rather than the initiation step. Modifies both alpha- and beta-tubulins with a preference for the alpha-tail. Unlike most polyglutamylases of the tubulin--tyrosine ligase family, only displays a catalytic activity when in complex with other proteins as it is most likely lacking domains important for autonomous activity. Part of the neuronal tubulin polyglutamylase complex. Mediates cilia and flagella polyglutamylation which is essential for their biogenesis and motility. Involved in respiratory motile cilia function through the regulation of beating asymmetry. Essential for sperm flagella biogenesis, motility and male fertility. Also mediates glutamylation of non-tubulin proteins. Involved in KLF4 glutamylation which impedes its ubiquitination, thereby leading to somatic cell reprogramming, pluripotency maintenance and embryogenesis. The chain is Polyglutamylase complex subunit TTLL1 from Mus musculus (Mouse).